Here is a 262-residue protein sequence, read N- to C-terminus: Adenosylcobinamide-GDP ribazoletransferase (262 aa).

Transmembrane regions (helical) follow at residues 43 to 63 (YFGL…WLTQ), 66 to 86 (LPAG…TGGF), 120 to 140 (GALA…ELAL), 146 to 166 (AGSA…SIIF), 191 to 211 (LLIL…LAAL), and 242 to 262 (AAQQ…GNIL).

The protein belongs to the CobS family. It depends on Mg(2+) as a cofactor.

It is found in the cell inner membrane. It carries out the reaction alpha-ribazole + adenosylcob(III)inamide-GDP = adenosylcob(III)alamin + GMP + H(+). The enzyme catalyses alpha-ribazole 5'-phosphate + adenosylcob(III)inamide-GDP = adenosylcob(III)alamin 5'-phosphate + GMP + H(+). The protein operates within cofactor biosynthesis; adenosylcobalamin biosynthesis; adenosylcobalamin from cob(II)yrinate a,c-diamide: step 7/7. In terms of biological role, joins adenosylcobinamide-GDP and alpha-ribazole to generate adenosylcobalamin (Ado-cobalamin). Also synthesizes adenosylcobalamin 5'-phosphate from adenosylcobinamide-GDP and alpha-ribazole 5'-phosphate. The chain is Adenosylcobinamide-GDP ribazoletransferase from Shewanella baltica (strain OS195).